A 340-amino-acid polypeptide reads, in one-letter code: Immunoglobulin-binding protein 1 family member C (340 aa).

Disordered regions lie at residues 223–243 (KDSS…PPMK) and 292–340 (PEEF…QNMG). The segment covering 303-314 (EDQEKEEEDDEQ) has biased composition (acidic residues). A compositionally biased stretch (basic and acidic residues) spans 318–330 (RAREWDDWKDTHP).

It belongs to the IGBP1/TAP42 family.

The chain is Immunoglobulin-binding protein 1 family member C from Homo sapiens (Human).